The chain runs to 57 residues: UPF0391 membrane protein Atu4467 (57 aa).

Helical transmembrane passes span 4 to 24 (WALI…TGIS) and 33 to 53 (ILFF…LMAG).

This sequence belongs to the UPF0391 family.

The protein resides in the cell membrane. This Agrobacterium fabrum (strain C58 / ATCC 33970) (Agrobacterium tumefaciens (strain C58)) protein is UPF0391 membrane protein Atu4467.